We begin with the raw amino-acid sequence, 101 residues long: ATP-dependent Clp protease adapter protein ClpS (101 aa).

This sequence belongs to the ClpS family. As to quaternary structure, binds to the N-terminal domain of the chaperone ClpA.

In terms of biological role, involved in the modulation of the specificity of the ClpAP-mediated ATP-dependent protein degradation. The polypeptide is ATP-dependent Clp protease adapter protein ClpS (Corynebacterium jeikeium (strain K411)).